We begin with the raw amino-acid sequence, 720 residues long: ATP-dependent DNA helicase Hel308 (720 aa).

Residues S23, Q28, and 46–53 (IPTASGKT) contribute to the ATP site. The 165-residue stretch at 33–197 (KSGILEGKNA…WLNAELIVSD (165 aa)) folds into the Helicase ATP-binding domain. The DEAH box motif lies at 145–148 (DEIH). One can recognise a Helicase C-terminal domain in the interval 229-422 (LVYDAIRKKK…NLRSQVLALI (194 aa)).

The protein belongs to the helicase family. Hel308 subfamily. In terms of assembly, monomer. Interacts with PCNA. Requires Mg(2+) as cofactor. The cofactor is Zn(2+).

The enzyme catalyses Couples ATP hydrolysis with the unwinding of duplex DNA by translocating in the 3'-5' direction.. It carries out the reaction ATP + H2O = ADP + phosphate + H(+). Its function is as follows. DNA-dependent ATPase and 3'-5' DNA helicase that may be involved in repair of stalled replication forks. Unwinds the lagging strand from forked DNA structures in a 3'-5' direction. PCNA, the DNA polymerase sliding clamp subunit, stimulates the helicase activity, and may alter substrate specificity. Unwinds branched DNA (Holliday junctions) in an ATP-dependent fashion; ss- and dsDNA stimulate ATPase to the greatest extent, although it preferentially binds DNA with a single-stranded region. Processes a RecA-mediated recombination intermediate between gapped circular and homologous linear dsDNA. The protein is ATP-dependent DNA helicase Hel308 of Pyrococcus furiosus (strain ATCC 43587 / DSM 3638 / JCM 8422 / Vc1).